The primary structure comprises 151 residues: Ribosome maturation factor RimP (151 aa).

It belongs to the RimP family.

Its subcellular location is the cytoplasm. Functionally, required for maturation of 30S ribosomal subunits. In Vibrio vulnificus (strain CMCP6), this protein is Ribosome maturation factor RimP.